A 515-amino-acid polypeptide reads, in one-letter code: Sugar transport protein MST4 (515 aa).

The Cytoplasmic portion of the chain corresponds to 1–17 (MAGGFSVSGSGVEFEAK). Residues 18–38 (ITPIVIISCIMAATGGLMFGY) form a helical membrane-spanning segment. Over 39-78 (DVGISGGVTSMDDFLREFFPTVLKKKHEDKESNYCKYDNQ) the chain is Extracellular. Residues 79–99 (GLQLFTSSLYLAGLTATFFAS) form a helical membrane-spanning segment. Residues 100-108 (YTTRRLGRR) lie on the Cytoplasmic side of the membrane. Residues 109–129 (LTMLIAGVFFIVGVIFNGAAQ) form a helical membrane-spanning segment. Residues 130-138 (NLAMLIVGR) lie on the Extracellular side of the membrane. The helical transmembrane segment at 139–159 (ILLGCGVGFANQAVPLFLSEI) threads the bilayer. At 160–165 (APTRIR) the chain is on the cytoplasmic side. A helical transmembrane segment spans residues 166–186 (GGLNILFQLNVTIGILFANLV). Residues 187–199 (NYGTAKIHPWGWR) are Extracellular-facing. Residues 200-220 (LSLSLAGIPAALLTLGALFVV) form a helical membrane-spanning segment. Topologically, residues 221–280 (DTPNSLIERGRLEEGKAVLRKIRGTDNVEPEFNEIVEASRVAQEVKHPFRNLLQRRNRPQ) are cytoplasmic. The helical transmembrane segment at 281-301 (LVIAVLLQIFQQFTGINAIMF) threads the bilayer. Residues 302–315 (YAPVLFNTLGFKTD) are Extracellular-facing. A helical membrane pass occupies residues 316–336 (ASLYSAVITGAVNVLSTLVSV). The Cytoplasmic segment spans residues 337 to 347 (YSVDRVGRRML). The helical transmembrane segment at 348-368 (LLEAGVQMFLSQVAIAVVLGI) threads the bilayer. Residues 369–379 (KVTDRSDNLGH) are Extracellular-facing. The chain crosses the membrane as a helical span at residues 380-400 (GWAIMVVVMVCTFVSSFAWSW). Over 401–422 (GPLGWLIPSETFPLETRSAGQS) the chain is Cytoplasmic. The helical transmembrane segment at 423-443 (VTVCVNLLFTFVIAQAFLSML) threads the bilayer. The Extracellular segment spans residues 444–448 (CHLKY). Residues 449–469 (AIFAFFSAWVVVMSLFVLFFL) form a helical membrane-spanning segment. The Cytoplasmic segment spans residues 470–515 (PETKNIPIEEMTERVWKQHWFWKRFMDDADKHHVVPNGGKSNGATV).

This sequence belongs to the major facilitator superfamily. Sugar transporter (TC 2.A.1.1) family. In terms of tissue distribution, expressed in roots, shoots, leaf blades, leaf sheaths, anthers, ovaries and embryos.

Its subcellular location is the membrane. Mediates active uptake of hexoses by sugar:proton symport. Can transport glucose, fructose, mannose and galactose. Can transport xylose and ribose. The protein is Sugar transport protein MST4 of Oryza sativa subsp. japonica (Rice).